Here is a 183-residue protein sequence, read N- to C-terminus: Large ribosomal subunit protein uL5 (183 aa).

It belongs to the universal ribosomal protein uL5 family. In terms of assembly, part of the 50S ribosomal subunit; part of the 5S rRNA/L5/L18/L25 subcomplex. Contacts the 5S rRNA and the P site tRNA. Forms a bridge to the 30S subunit in the 70S ribosome.

Functionally, this is one of the proteins that bind and probably mediate the attachment of the 5S RNA into the large ribosomal subunit, where it forms part of the central protuberance. In the 70S ribosome it contacts protein S13 of the 30S subunit (bridge B1b), connecting the 2 subunits; this bridge is implicated in subunit movement. Contacts the P site tRNA; the 5S rRNA and some of its associated proteins might help stabilize positioning of ribosome-bound tRNAs. The protein is Large ribosomal subunit protein uL5 of Legionella pneumophila (strain Lens).